The sequence spans 148 residues: Large ribosomal subunit protein bL9 (148 aa).

It belongs to the bacterial ribosomal protein bL9 family.

Binds to the 23S rRNA. The polypeptide is Large ribosomal subunit protein bL9 (Listeria monocytogenes serotype 4b (strain CLIP80459)).